A 149-amino-acid chain; its full sequence is MERTYLMIKPDGVQRGLVGEIISRFEKKGFKLVGMKFLRLTREMAEKHYAEHVGKPFFAGLVDYIISGPVVAMCWEGKDIVSVSREMMGATNPAKAAPGTIRGTYAVDIGRNIIHGSDSPASAERELAIYFQSDELVEWDRTLQGWLTE.

Residues Lys-9, Phe-57, Arg-85, Thr-91, Arg-102, and Asn-112 each coordinate ATP. His-115 acts as the Pros-phosphohistidine intermediate in catalysis.

This sequence belongs to the NDK family. In terms of assembly, homotetramer. Mg(2+) serves as cofactor.

It localises to the cytoplasm. It carries out the reaction a 2'-deoxyribonucleoside 5'-diphosphate + ATP = a 2'-deoxyribonucleoside 5'-triphosphate + ADP. The catalysed reaction is a ribonucleoside 5'-diphosphate + ATP = a ribonucleoside 5'-triphosphate + ADP. Functionally, major role in the synthesis of nucleoside triphosphates other than ATP. The ATP gamma phosphate is transferred to the NDP beta phosphate via a ping-pong mechanism, using a phosphorylated active-site intermediate. This chain is Nucleoside diphosphate kinase, found in Heliobacterium modesticaldum (strain ATCC 51547 / Ice1).